The chain runs to 906 residues: Protein translocase subunit SecA (906 aa).

Residues Gln-89, 107–111 (GEGKT), and Asp-502 contribute to the ATP site. Residues 868-887 (VPPAQRDPADPRTWGKVSRN) form a disordered region. Cys-890, Cys-892, Cys-901, and His-902 together coordinate Zn(2+).

It belongs to the SecA family. Monomer and homodimer. Part of the essential Sec protein translocation apparatus which comprises SecA, SecYEG and auxiliary proteins SecDF-YajC and YidC. Zn(2+) serves as cofactor.

It is found in the cell inner membrane. Its subcellular location is the cytoplasm. The catalysed reaction is ATP + H2O + cellular proteinSide 1 = ADP + phosphate + cellular proteinSide 2.. Part of the Sec protein translocase complex. Interacts with the SecYEG preprotein conducting channel. Has a central role in coupling the hydrolysis of ATP to the transfer of proteins into and across the cell membrane, serving both as a receptor for the preprotein-SecB complex and as an ATP-driven molecular motor driving the stepwise translocation of polypeptide chains across the membrane. The protein is Protein translocase subunit SecA of Brucella melitensis biotype 1 (strain ATCC 23456 / CCUG 17765 / NCTC 10094 / 16M).